The chain runs to 300 residues: uncharacterized protein (300 aa).

The Periplasmic segment spans residues 1–7; it reads MGSTRKG. Residues 8-28 form a helical membrane-spanning segment; that stretch reads MLNVLIAAVLWGSSGVCAQYI. The region spanning 16–145 is the EamA 1 domain; sequence VLWGSSGVCA…SLIGTFLLVT (130 aa). At 29–45 the chain is on the cytoplasmic side; it reads MEQSRMSSQFLTMIRLL. The helical transmembrane segment at 46 to 66 threads the bilayer; that stretch reads FAGLILVTFSFMHGDKIFSIL. Topologically, residues 67 to 71 are periplasmic; the sequence is KNRKD. The chain crosses the membrane as a helical span at residues 72 to 92; sequence ALSLLIFSVVGALTVQLTFLL. Residues 93-99 lie on the Cytoplasmic side of the membrane; sequence TIEKSNA. A helical transmembrane segment spans residues 100 to 120; sequence ATATVLQFLSPTIIVAWFALA. Topologically, residues 121–124 are periplasmic; it reads RRTR. Residues 125–145 traverse the membrane as a helical segment; the sequence is PGILVLTAILTSLIGTFLLVT. At 146-151 the chain is on the cytoplasmic side; it reads HGNPTS. The helical transmembrane segment at 152–172 threads the bilayer; the sequence is LSISSAALFWGIASAFAAAFY. The EamA 2 domain occupies 167–291; the sequence is FAAAFYTTWP…ILSSVILISL (125 aa). Topologically, residues 173–184 are periplasmic; that stretch reads TTWPSRLIAQYG. Residues 185-205 traverse the membrane as a helical segment; the sequence is TLPVVGWSMSFGGLILLPFYA. Topologically, residues 206–216 are cytoplasmic; sequence KEGTHFAVSGS. A helical membrane pass occupies residues 217-237; that stretch reads LILAFFYLVVIGTSLTFSLYL. Residues 238–263 lie on the Periplasmic side of the membrane; the sequence is KGAQLIGGPKASILSCAEPLSSALLS. A helical transmembrane segment spans residues 264-284; sequence LLLLGISFTLPDWLGTLLILS. Residues 285 to 300 are Cytoplasmic-facing; sequence SVILISLDSRRRARAA.

This sequence belongs to the EamA transporter family.

It is found in the cell inner membrane. This is an uncharacterized protein from Salmonella typhimurium (strain LT2 / SGSC1412 / ATCC 700720).